The sequence spans 388 residues: MGFPRILSKNNKIYTKLGEFCLSGDSFWIVCHTCQEELQTQDQFWKHIQDEHNFMHGVAKEHSRTSSYCLTDVEAAAAAATPGSSSQQGATAISVPLALYTCSTKYSEEEQREVEMHEQQVQHQVQQQQAQQQQAQQQQHQQSQQQGHQQHQVQQQQTHQQLQQQRDVAKELAELHANAVAAAAASAAVVSTGEGTTQSNSAIDIKIEPSSLTLTPEMQAAAAAGGTIYHLPQLVPPPVPPPPPGSGFVSVSASTSTSNTVSTTPPNVLQQQQQLNMSVVPSTAMAAAMLAASQEQLPKDSNSTTASAGSAVSSDDGERWYVCDYETCGLKFKYKSRMELHRVVHSKERRFNCELCSASFKQSCNLSTHRKKKHALRGIKSEILPQRF.

A C2H2-type 1 zinc finger spans residues 29 to 52 (IVCHTCQEELQTQDQFWKHIQDEH). Low complexity-rich tracts occupy residues 138-165 (QQHQQSQQQGHQQHQVQQQQTHQQLQQQ) and 249-265 (VSVSASTSTSNTVSTTP). Disordered stretches follow at residues 138–168 (QQHQQSQQQGHQQHQVQQQQTHQQLQQQRDV) and 240–265 (PPPPPGSGFVSVSASTSTSNTVSTTP). C2H2-type zinc fingers lie at residues 321-345 (YVCDYETCGLKFKYKSRMELHRVVH) and 351-374 (FNCELCSASFKQSCNLSTHRKKKH).

Its subcellular location is the nucleus. May be a transcription factor for genes having (A+T) stretches in their promoter and/or enhancer regions. Binds to AT rich DNA. In Drosophila melanogaster (Fruit fly), this protein is AT-rich binding protein.